The chain runs to 493 residues: 3-octaprenyl-4-hydroxybenzoate carboxy-lyase (493 aa).

N172 provides a ligand contact to Mn(2+). Prenylated FMN-binding positions include 175 to 177 (IYR), 189 to 191 (RWL), and 194 to 195 (RG). Residue E238 participates in Mn(2+) binding. D287 acts as the Proton donor in catalysis.

The protein belongs to the UbiD family. As to quaternary structure, homohexamer. The cofactor is prenylated FMN. Requires Mn(2+) as cofactor.

The protein localises to the cell membrane. It catalyses the reaction a 4-hydroxy-3-(all-trans-polyprenyl)benzoate + H(+) = a 2-(all-trans-polyprenyl)phenol + CO2. Its pathway is cofactor biosynthesis; ubiquinone biosynthesis. Its function is as follows. Catalyzes the decarboxylation of 3-octaprenyl-4-hydroxy benzoate to 2-octaprenylphenol, an intermediate step in ubiquinone biosynthesis. This chain is 3-octaprenyl-4-hydroxybenzoate carboxy-lyase, found in Shewanella denitrificans (strain OS217 / ATCC BAA-1090 / DSM 15013).